We begin with the raw amino-acid sequence, 1132 residues long: DNA-directed RNA polymerase subunit beta (1132 aa).

This sequence belongs to the RNA polymerase beta chain family. As to quaternary structure, the RNAP catalytic core consists of 2 alpha, 1 beta, 1 beta' and 1 omega subunit. When a sigma factor is associated with the core the holoenzyme is formed, which can initiate transcription.

It catalyses the reaction RNA(n) + a ribonucleoside 5'-triphosphate = RNA(n+1) + diphosphate. Functionally, DNA-dependent RNA polymerase catalyzes the transcription of DNA into RNA using the four ribonucleoside triphosphates as substrates. This is DNA-directed RNA polymerase subunit beta from Carboxydothermus hydrogenoformans (strain ATCC BAA-161 / DSM 6008 / Z-2901).